Here is a 276-residue protein sequence, read N- to C-terminus: uncharacterized protein (276 aa).

It to E.cuniculi ECU05_1600/ECU11_0130.

This is an uncharacterized protein from Encephalitozoon cuniculi (strain GB-M1) (Microsporidian parasite).